We begin with the raw amino-acid sequence, 689 residues long: DNA ligase (689 aa).

NAD(+) is bound by residues 40-44, 89-90, and Glu-121; these read DAEYD and SL. The active-site N6-AMP-lysine intermediate is the Lys-123. Positions 144, 179, 295, and 319 each coordinate NAD(+). The Zn(2+) site is built by Cys-413, Cys-416, Cys-431, and Cys-437. A BRCT domain is found at 610-689; the sequence is RAQSSLTGKI…EEWLTLIKNA (80 aa).

Belongs to the NAD-dependent DNA ligase family. LigA subfamily. Mg(2+) serves as cofactor. The cofactor is Mn(2+).

It carries out the reaction NAD(+) + (deoxyribonucleotide)n-3'-hydroxyl + 5'-phospho-(deoxyribonucleotide)m = (deoxyribonucleotide)n+m + AMP + beta-nicotinamide D-nucleotide.. In terms of biological role, DNA ligase that catalyzes the formation of phosphodiester linkages between 5'-phosphoryl and 3'-hydroxyl groups in double-stranded DNA using NAD as a coenzyme and as the energy source for the reaction. It is essential for DNA replication and repair of damaged DNA. The protein is DNA ligase of Rickettsia akari (strain Hartford).